A 423-amino-acid polypeptide reads, in one-letter code: COP9 signalosome complex subunit 3 (423 aa).

An N-acetylalanine modification is found at A2. Residues 197–365 (NFERALYFYE…GMVSFHDNPE (169 aa)) enclose the PCI domain. Positions 402-423 (QFVQKSMGSQEDDSGNKPSSYS) are disordered. 3 positions are modified to phosphoserine: S407, S410, and S423.

The protein belongs to the CSN3 family. In terms of assembly, component of the CSN complex, composed of COPS1/GPS1, COPS2, COPS3, COPS4, COPS5, COPS6, COPS7 (COPS7A or COPS7B), COPS8 and COPS9. In the complex, it probably interacts directly with COPS1, COPS4, COPS8 and COPS9. Interacts with CK2 and PKD. Interacts with the translation initiation factor EIF3S6 and IKBKG. Interacts with ERCC6. Widely expressed.

Its subcellular location is the cytoplasm. The protein resides in the nucleus. Functionally, component of the COP9 signalosome complex (CSN), a complex involved in various cellular and developmental processes. The CSN complex is an essential regulator of the ubiquitin (Ubl) conjugation pathway by mediating the deneddylation of the cullin subunits of SCF-type E3 ligase complexes, leading to decrease the Ubl ligase activity of SCF-type complexes such as SCF, CSA or DDB2. The complex is also involved in phosphorylation of p53/TP53, c-jun/JUN, IkappaBalpha/NFKBIA, ITPK1 and IRF8/ICSBP, possibly via its association with CK2 and PKD kinases. CSN-dependent phosphorylation of TP53 and JUN promotes and protects degradation by the Ubl system, respectively. Essential to maintain the survival of epiblast cells and thus the development of the postimplantation embryo. This Mus musculus (Mouse) protein is COP9 signalosome complex subunit 3 (Cops3).